The chain runs to 229 residues: Enolase-phosphatase E1 (229 aa).

The protein belongs to the HAD-like hydrolase superfamily. MasA/MtnC family. Monomer. Mg(2+) is required as a cofactor.

The catalysed reaction is 5-methylsulfanyl-2,3-dioxopentyl phosphate + H2O = 1,2-dihydroxy-5-(methylsulfanyl)pent-1-en-3-one + phosphate. It functions in the pathway amino-acid biosynthesis; L-methionine biosynthesis via salvage pathway; L-methionine from S-methyl-5-thio-alpha-D-ribose 1-phosphate: step 3/6. Its pathway is amino-acid biosynthesis; L-methionine biosynthesis via salvage pathway; L-methionine from S-methyl-5-thio-alpha-D-ribose 1-phosphate: step 4/6. In terms of biological role, bifunctional enzyme that catalyzes the enolization of 2,3-diketo-5-methylthiopentyl-1-phosphate (DK-MTP-1-P) into the intermediate 2-hydroxy-3-keto-5-methylthiopentenyl-1-phosphate (HK-MTPenyl-1-P), which is then dephosphorylated to form the acireductone 1,2-dihydroxy-3-keto-5-methylthiopentene (DHK-MTPene). In Yersinia enterocolitica serotype O:8 / biotype 1B (strain NCTC 13174 / 8081), this protein is Enolase-phosphatase E1.